A 315-amino-acid polypeptide reads, in one-letter code: 4-hydroxy-3-methylbut-2-enyl diphosphate reductase (315 aa).

Cys-12 provides a ligand contact to [4Fe-4S] cluster. (2E)-4-hydroxy-3-methylbut-2-enyl diphosphate is bound by residues His-43 and His-81. Dimethylallyl diphosphate-binding residues include His-43 and His-81. Isopentenyl diphosphate is bound by residues His-43 and His-81. Cys-103 is a [4Fe-4S] cluster binding site. His-131 contacts (2E)-4-hydroxy-3-methylbut-2-enyl diphosphate. His-131 is a binding site for dimethylallyl diphosphate. Position 131 (His-131) interacts with isopentenyl diphosphate. Residue Glu-133 is the Proton donor of the active site. Thr-170 provides a ligand contact to (2E)-4-hydroxy-3-methylbut-2-enyl diphosphate. Cys-198 contributes to the [4Fe-4S] cluster binding site. (2E)-4-hydroxy-3-methylbut-2-enyl diphosphate is bound by residues Ser-226, Asn-228, and Ser-271. Ser-226, Asn-228, and Ser-271 together coordinate dimethylallyl diphosphate. 3 residues coordinate isopentenyl diphosphate: Ser-226, Asn-228, and Ser-271.

This sequence belongs to the IspH family. The cofactor is [4Fe-4S] cluster.

The enzyme catalyses isopentenyl diphosphate + 2 oxidized [2Fe-2S]-[ferredoxin] + H2O = (2E)-4-hydroxy-3-methylbut-2-enyl diphosphate + 2 reduced [2Fe-2S]-[ferredoxin] + 2 H(+). The catalysed reaction is dimethylallyl diphosphate + 2 oxidized [2Fe-2S]-[ferredoxin] + H2O = (2E)-4-hydroxy-3-methylbut-2-enyl diphosphate + 2 reduced [2Fe-2S]-[ferredoxin] + 2 H(+). It participates in isoprenoid biosynthesis; dimethylallyl diphosphate biosynthesis; dimethylallyl diphosphate from (2E)-4-hydroxy-3-methylbutenyl diphosphate: step 1/1. The protein operates within isoprenoid biosynthesis; isopentenyl diphosphate biosynthesis via DXP pathway; isopentenyl diphosphate from 1-deoxy-D-xylulose 5-phosphate: step 6/6. In terms of biological role, catalyzes the conversion of 1-hydroxy-2-methyl-2-(E)-butenyl 4-diphosphate (HMBPP) into a mixture of isopentenyl diphosphate (IPP) and dimethylallyl diphosphate (DMAPP). Acts in the terminal step of the DOXP/MEP pathway for isoprenoid precursor biosynthesis. The sequence is that of 4-hydroxy-3-methylbut-2-enyl diphosphate reductase from Bacillus cytotoxicus (strain DSM 22905 / CIP 110041 / 391-98 / NVH 391-98).